The primary structure comprises 133 residues: Holo-[acyl-carrier-protein] synthase (133 aa).

Residues Asp8 and Glu57 each coordinate Mg(2+).

This sequence belongs to the P-Pant transferase superfamily. AcpS family. The cofactor is Mg(2+).

The protein resides in the cytoplasm. The catalysed reaction is apo-[ACP] + CoA = holo-[ACP] + adenosine 3',5'-bisphosphate + H(+). In terms of biological role, transfers the 4'-phosphopantetheine moiety from coenzyme A to a Ser of acyl-carrier-protein. This Bartonella bacilliformis (strain ATCC 35685 / KC583 / Herrer 020/F12,63) protein is Holo-[acyl-carrier-protein] synthase.